The chain runs to 414 residues: MRKFMTTTAVAALMLAATAARAAENVEVLHWWTSGGEAAALDVLKKDLESKGISWTDMPVAGGGGTEAMTVLRARVTAGNAPTAVQMLGFDILDWAKEGALGNLDEVAAKEGWDKVVPAALQQFSKYDGHWIAAPVNVHSTNWVWINKAALDKAGAKEPTTWEELIALLDKFKEQGITPIAHGGQPWQDATIFDAVVLSLGNDFYKQAFIDLDPAALGGDKMKEAFDRMTKLRSYVDDNFSGRDWNLASAMVIENKAGLQFMGDWAKGEFLKAKKVPGTDFVCMRFPGTQGSVTFNSDQFAMFKVSEDKVPAQLQMASAIESPAFQSAFNVVKGSVPARTDVPDTDFDACGKKGIKDLAEANTNGTLFGSMAHGHANPAAVKNAIYDVVTRQFNGELNSEEAVTELVAAVEAAK.

The first 22 residues, 1–22 (MRKFMTTTAVAALMLAATAARA), serve as a signal peptide directing secretion.

The protein belongs to the bacterial solute-binding protein 1 family.

The protein localises to the periplasm. Functionally, part of a binding-protein-dependent transport system for a sugar. The sequence is that of Probable sugar-binding periplasmic protein from Rhizobium meliloti (strain 1021) (Ensifer meliloti).